The following is a 424-amino-acid chain: UPF0761 membrane protein Smlt0865 (424 aa).

The next 6 helical transmembrane spans lie at 48 to 68 (VFAL…FPVF), 101 to 121 (SAGQ…LITL), 144 to 164 (FLVY…SLAV), 181 to 201 (WLAE…CITL), 216 to 236 (AVPG…GIGA), and 251 to 271 (VAFV…VLLG).

The protein belongs to the UPF0761 family.

It localises to the cell inner membrane. The polypeptide is UPF0761 membrane protein Smlt0865 (Stenotrophomonas maltophilia (strain K279a)).